Consider the following 98-residue polypeptide: DNA-directed RNA polymerase subunit omega (98 aa).

The protein belongs to the RNA polymerase subunit omega family. In terms of assembly, the RNAP catalytic core consists of 2 alpha, 1 beta, 1 beta' and 1 omega subunit. When a sigma factor is associated with the core the holoenzyme is formed, which can initiate transcription.

It carries out the reaction RNA(n) + a ribonucleoside 5'-triphosphate = RNA(n+1) + diphosphate. In terms of biological role, promotes RNA polymerase assembly. Latches the N- and C-terminal regions of the beta' subunit thereby facilitating its interaction with the beta and alpha subunits. This is DNA-directed RNA polymerase subunit omega from Tropheryma whipplei (strain Twist) (Whipple's bacillus).